We begin with the raw amino-acid sequence, 376 residues long: Putative glutamate--cysteine ligase 2-1 (376 aa).

The protein belongs to the glutamate--cysteine ligase type 2 family. YbdK subfamily.

The catalysed reaction is L-cysteine + L-glutamate + ATP = gamma-L-glutamyl-L-cysteine + ADP + phosphate + H(+). Functionally, ATP-dependent carboxylate-amine ligase which exhibits weak glutamate--cysteine ligase activity. In Mycobacterium sp. (strain KMS), this protein is Putative glutamate--cysteine ligase 2-1.